A 317-amino-acid polypeptide reads, in one-letter code: Flagellar hook-associated protein 3 (317 aa).

The protein belongs to the bacterial flagellin family.

The protein localises to the secreted. It localises to the bacterial flagellum. The polypeptide is Flagellar hook-associated protein 3 (flgL) (Salmonella typhimurium (strain LT2 / SGSC1412 / ATCC 700720)).